We begin with the raw amino-acid sequence, 141 residues long: Hemoglobin subunit alpha-D (141 aa).

In terms of domain architecture, Globin spans 1-141; the sequence is VLTAEDKKLI…VAAVLAEKYR (141 aa). 2 residues coordinate heme b: His-58 and His-87.

It belongs to the globin family. As to quaternary structure, heterotetramer of two alpha-D chains and two beta chains. In terms of tissue distribution, red blood cells.

Involved in oxygen transport from the lung to the various peripheral tissues. This chain is Hemoglobin subunit alpha-D (HBAD), found in Sturnus vulgaris (Starling).